The chain runs to 180 residues: ATP synthase subunit b 2 (180 aa).

A helical transmembrane segment spans residues 33 to 53 (IFWLLVTLVAIYFLLTRVALP).

Belongs to the ATPase B chain family. As to quaternary structure, F-type ATPases have 2 components, F(1) - the catalytic core - and F(0) - the membrane proton channel. F(1) has five subunits: alpha(3), beta(3), gamma(1), delta(1), epsilon(1). F(0) has three main subunits: a(1), b(2) and c(10-14). The alpha and beta chains form an alternating ring which encloses part of the gamma chain. F(1) is attached to F(0) by a central stalk formed by the gamma and epsilon chains, while a peripheral stalk is formed by the delta and b chains.

Its subcellular location is the cell inner membrane. In terms of biological role, f(1)F(0) ATP synthase produces ATP from ADP in the presence of a proton or sodium gradient. F-type ATPases consist of two structural domains, F(1) containing the extramembraneous catalytic core and F(0) containing the membrane proton channel, linked together by a central stalk and a peripheral stalk. During catalysis, ATP synthesis in the catalytic domain of F(1) is coupled via a rotary mechanism of the central stalk subunits to proton translocation. Functionally, component of the F(0) channel, it forms part of the peripheral stalk, linking F(1) to F(0). The b'-subunit is a diverged and duplicated form of b found in plants and photosynthetic bacteria. This Cereibacter sphaeroides (strain ATCC 17029 / ATH 2.4.9) (Rhodobacter sphaeroides) protein is ATP synthase subunit b 2 (atpF2).